The sequence spans 394 residues: Ribulose bisphosphate carboxylase large chain (394 aa).

An N6,N6,N6-trimethyllysine modification is found at Lys-5. 2 residues coordinate substrate: Asn-114 and Thr-164. The Proton acceptor role is filled by Lys-166. Residue Lys-168 coordinates substrate. Mg(2+)-binding residues include Lys-192, Asp-194, and Glu-195. Lys-192 is subject to N6-carboxylysine. Residue His-285 is the Proton acceptor of the active site. Substrate is bound by residues Arg-286, His-318, and Ser-370.

The protein belongs to the RuBisCO large chain family. Type I subfamily. Heterohexadecamer of 8 large chains and 8 small chains. Mg(2+) is required as a cofactor.

It localises to the plastid. It is found in the chloroplast. It catalyses the reaction 2 (2R)-3-phosphoglycerate + 2 H(+) = D-ribulose 1,5-bisphosphate + CO2 + H2O. The enzyme catalyses D-ribulose 1,5-bisphosphate + O2 = 2-phosphoglycolate + (2R)-3-phosphoglycerate + 2 H(+). Its function is as follows. RuBisCO catalyzes two reactions: the carboxylation of D-ribulose 1,5-bisphosphate, the primary event in carbon dioxide fixation, as well as the oxidative fragmentation of the pentose substrate in the photorespiration process. Both reactions occur simultaneously and in competition at the same active site. The polypeptide is Ribulose bisphosphate carboxylase large chain (rbcL) (Nymphaea odorata (White water lily)).